The primary structure comprises 334 residues: N-acetyl-gamma-glutamyl-phosphate reductase (334 aa).

The active site involves C154.

Belongs to the NAGSA dehydrogenase family. Type 1 subfamily.

The protein resides in the cytoplasm. The enzyme catalyses N-acetyl-L-glutamate 5-semialdehyde + phosphate + NADP(+) = N-acetyl-L-glutamyl 5-phosphate + NADPH + H(+). Its pathway is amino-acid biosynthesis; L-arginine biosynthesis; N(2)-acetyl-L-ornithine from L-glutamate: step 3/4. Catalyzes the NADPH-dependent reduction of N-acetyl-5-glutamyl phosphate to yield N-acetyl-L-glutamate 5-semialdehyde. This is N-acetyl-gamma-glutamyl-phosphate reductase from Aliivibrio fischeri (strain ATCC 700601 / ES114) (Vibrio fischeri).